The sequence spans 351 residues: Alcohol dehydrogenase 2 (351 aa).

Residues C47, H70, C101, C104, C107, C115, and C157 each contribute to the Zn(2+) site. NAD(+) contacts are provided by residues 181-187, D205, K209, 271-273, and R343; these read GAGGGLG and VGL.

It belongs to the zinc-containing alcohol dehydrogenase family. Homotetramer. The cofactor is Zn(2+).

The enzyme catalyses a primary alcohol + NAD(+) = an aldehyde + NADH + H(+). It catalyses the reaction a secondary alcohol + NAD(+) = a ketone + NADH + H(+). This Caenorhabditis elegans protein is Alcohol dehydrogenase 2 (sodh-2).